The chain runs to 80 residues: Toxin Acra I-3 (80 aa).

Residues M1–G22 form the signal peptide. Residues V25–L80 form the LCN-type CS-alpha/beta domain. 3 disulfides stabilise this stretch: C40/C63, C49/C68, and C53/C70.

This sequence belongs to the long (3 C-C) scorpion toxin superfamily. Sodium/Potassium channel inhibitor family. As to expression, expressed by the venom gland.

Its subcellular location is the secreted. Functionally, probable neurotoxin that inhibits ion channels. Is toxic to mice. This is Toxin Acra I-3 from Androctonus crassicauda (Arabian fat-tailed scorpion).